A 506-amino-acid chain; its full sequence is Maturase K (506 aa).

The protein belongs to the intron maturase 2 family. MatK subfamily.

It is found in the plastid. It localises to the chloroplast. Usually encoded in the trnK tRNA gene intron. Probably assists in splicing its own and other chloroplast group II introns. This is Maturase K from Jurinea cyanoides.